Reading from the N-terminus, the 263-residue chain is Endonuclease 8 (263 aa).

Pro-2 functions as the Schiff-base intermediate with DNA in the catalytic mechanism. The active-site Proton donor is Glu-3. Catalysis depends on Lys-53, which acts as the Proton donor; for beta-elimination activity. Positions 70, 125, and 169 each coordinate DNA. Residues 229–263 (KVFHRDGELCERCGGIIEKTTLSSRPFYWCPGCQH) form an FPG-type zinc finger. Arg-253 (proton donor; for delta-elimination activity) is an active-site residue.

The protein belongs to the FPG family. Zn(2+) is required as a cofactor.

The catalysed reaction is 2'-deoxyribonucleotide-(2'-deoxyribose 5'-phosphate)-2'-deoxyribonucleotide-DNA = a 3'-end 2'-deoxyribonucleotide-(2,3-dehydro-2,3-deoxyribose 5'-phosphate)-DNA + a 5'-end 5'-phospho-2'-deoxyribonucleoside-DNA + H(+). Its function is as follows. Involved in base excision repair of DNA damaged by oxidation or by mutagenic agents. Acts as a DNA glycosylase that recognizes and removes damaged bases. Has a preference for oxidized pyrimidines, such as thymine glycol, 5,6-dihydrouracil and 5,6-dihydrothymine. Has AP (apurinic/apyrimidinic) lyase activity and introduces nicks in the DNA strand. Cleaves the DNA backbone by beta-delta elimination to generate a single-strand break at the site of the removed base with both 3'- and 5'-phosphates. This Shigella dysenteriae serotype 1 (strain Sd197) protein is Endonuclease 8.